The primary structure comprises 219 residues: Probable glutathione S-transferase GSTF1 (219 aa).

The region spanning 2–83 (TPVKVFGPAQ…YILRKYKTRE (82 aa)) is the GST N-terminal domain. Glutathione contacts are provided by residues S12, 41–42 (HK), 54–55 (QI), and 67–68 (ES). The GST C-terminal domain occupies 91-219 (NLREAAMVDV…LAAVMAPQGA (129 aa)).

This sequence belongs to the GST superfamily. Phi family. In terms of tissue distribution, constitutively expressed in roots.

The enzyme catalyses RX + glutathione = an S-substituted glutathione + a halide anion + H(+). In terms of biological role, conjugation of reduced glutathione to a wide number of exogenous and endogenous hydrophobic electrophiles. The protein is Probable glutathione S-transferase GSTF1 (GSTF1) of Oryza sativa subsp. japonica (Rice).